Consider the following 91-residue polypeptide: DNA-directed RNA polymerase subunit omega (91 aa).

Belongs to the RNA polymerase subunit omega family. As to quaternary structure, the RNAP catalytic core consists of 2 alpha, 1 beta, 1 beta' and 1 omega subunit. When a sigma factor is associated with the core the holoenzyme is formed, which can initiate transcription.

The enzyme catalyses RNA(n) + a ribonucleoside 5'-triphosphate = RNA(n+1) + diphosphate. Promotes RNA polymerase assembly. Latches the N- and C-terminal regions of the beta' subunit thereby facilitating its interaction with the beta and alpha subunits. This chain is DNA-directed RNA polymerase subunit omega, found in Photorhabdus laumondii subsp. laumondii (strain DSM 15139 / CIP 105565 / TT01) (Photorhabdus luminescens subsp. laumondii).